Reading from the N-terminus, the 70-residue chain is U2-agatoxin-Ao1p (70 aa).

An N-terminal signal peptide occupies residues Met1–Ala20. A propeptide spanning residues Val21–Arg34 is cleaved from the precursor. 3 cysteine pairs are disulfide-bonded: Cys37–Cys53, Cys44–Cys58, and Cys52–Cys68. Leucine amide is present on Leu69.

It belongs to the neurotoxin 01 (U2-agtx) family. In terms of tissue distribution, expressed by the venom gland.

Its subcellular location is the secreted. Functionally, insect active toxin causing rapid but reversible paralysis in crickets. No activity shown in mammals. Does not show effect on mammalian voltage-gated calcium channels. The polypeptide is U2-agatoxin-Ao1p (Agelena orientalis (Funnel-web spider)).